We begin with the raw amino-acid sequence, 354 residues long: Kelch domain-containing protein 8B (354 aa).

Kelch repeat units follow at residues 1 to 31 (MATG…FQDG), 32 to 79 (HLLV…VLGK), 81 to 127 (VLVV…ERDG), 128 to 175 (MVYA…LHGN), 176 to 222 (KIYV…MAEG), 224 to 281 (VFSL…SLGD), 282 to 329 (HVVA…QAGP), and 331 to 354 (LFAI…RDGV).

It is found in the cytoplasm. The protein resides in the midbody. In terms of biological role, involved in pinching off the separated nuclei at the cleavage furrow and in cytokinesis. Required for mitotic integrity and maintenance of chromosomal stability. Protects cells against mitotic errors, centrosomal amplification, micronucleus formation and aneuploidy. Plays a key role of midbody function involving abscission of the daughter cells during cytokinesis and appropriate chromosomal and nuclear segregation into the daughter cells. This chain is Kelch domain-containing protein 8B (KLHDC8B), found in Bos taurus (Bovine).